Consider the following 89-residue polypeptide: Small ribosomal subunit protein uS15 (89 aa).

Residues 1 to 11 (MSITAERKAEV) show a composition bias toward basic and acidic residues. Positions 1–24 (MSITAERKAEVIKTSATKAGDTGS) are disordered.

Belongs to the universal ribosomal protein uS15 family. As to quaternary structure, part of the 30S ribosomal subunit. Forms a bridge to the 50S subunit in the 70S ribosome, contacting the 23S rRNA.

Its function is as follows. One of the primary rRNA binding proteins, it binds directly to 16S rRNA where it helps nucleate assembly of the platform of the 30S subunit by binding and bridging several RNA helices of the 16S rRNA. In terms of biological role, forms an intersubunit bridge (bridge B4) with the 23S rRNA of the 50S subunit in the ribosome. This chain is Small ribosomal subunit protein uS15, found in Rhodopseudomonas palustris (strain TIE-1).